Reading from the N-terminus, the 344-residue chain is Dihydroorotate dehydrogenase (quinone) (344 aa).

FMN-binding positions include 61 to 65 and threonine 85; that span reads AGLDK. Lysine 65 provides a ligand contact to substrate. 110–114 is a substrate binding site; it reads NRMGF. 2 residues coordinate FMN: asparagine 138 and asparagine 171. Asparagine 171 is a substrate binding site. Serine 174 functions as the Nucleophile in the catalytic mechanism. Asparagine 176 provides a ligand contact to substrate. 2 residues coordinate FMN: lysine 216 and threonine 244. 245–246 provides a ligand contact to substrate; that stretch reads NT. Residues glycine 267, glycine 296, and 317–318 each bind FMN; that span reads YS.

The protein belongs to the dihydroorotate dehydrogenase family. Type 2 subfamily. In terms of assembly, monomer. FMN serves as cofactor.

Its subcellular location is the cell membrane. It carries out the reaction (S)-dihydroorotate + a quinone = orotate + a quinol. It participates in pyrimidine metabolism; UMP biosynthesis via de novo pathway; orotate from (S)-dihydroorotate (quinone route): step 1/1. Functionally, catalyzes the conversion of dihydroorotate to orotate with quinone as electron acceptor. The sequence is that of Dihydroorotate dehydrogenase (quinone) from Psychrobacter arcticus (strain DSM 17307 / VKM B-2377 / 273-4).